An 804-amino-acid polypeptide reads, in one-letter code: Zinc finger protein YGR067C (804 aa).

2 C2H2-type zinc fingers span residues Tyr8–His30 and Phe36–His59. A compositionally biased stretch (polar residues) spans Gln782–Asn796. The tract at residues Gln782–Lys804 is disordered.

The protein resides in the nucleus. The protein is Zinc finger protein YGR067C of Saccharomyces cerevisiae (strain ATCC 204508 / S288c) (Baker's yeast).